A 231-amino-acid chain; its full sequence is Somatolactin (231 aa).

The first 24 residues, 1-24 (MNMMTVKQQGVWAALLWPYLLTAS), serve as a signal peptide directing secretion. Intrachain disulfides connect Cys-29–Cys-39, Cys-89–Cys-205, and Cys-222–Cys-230. Asn-145 carries an N-linked (GlcNAc...) asparagine glycan.

This sequence belongs to the somatotropin/prolactin family. In terms of tissue distribution, pituitary gland.

It localises to the secreted. This is Somatolactin from Paralichthys olivaceus (Bastard halibut).